We begin with the raw amino-acid sequence, 311 residues long: MRKIIIGSRRSQLALTQTEWVISKLKEAGAPFDFEIKKIITKGDQILDVTLSKVGGKGLFVKEIEQAMANKEIDIAVHSMKDVPSVLQEGFALGATTTRVDPRDALISNEGYTLAELPAGSIVGTSSLRRSAQILAKRPDLEVKWIRGNIETRLRKLKEEDFDAIILAAAGLERMGWSNEIVTEYLDPDLCVPAVGQGALGIECRADDDEVLEMLKTINDDTTAKTVLAERTFLHRMEGGCQVPIAGYATLTDEGEIELTALVGTPDGEQIFKEILRGKDPVQLGETMAQALMDQGAKEVLEQVKKGLESQ.

An S-(dipyrrolylmethanemethyl)cysteine modification is found at Cys241.

This sequence belongs to the HMBS family. As to quaternary structure, monomer. It depends on dipyrromethane as a cofactor.

It carries out the reaction 4 porphobilinogen + H2O = hydroxymethylbilane + 4 NH4(+). The protein operates within porphyrin-containing compound metabolism; protoporphyrin-IX biosynthesis; coproporphyrinogen-III from 5-aminolevulinate: step 2/4. Functionally, tetrapolymerization of the monopyrrole PBG into the hydroxymethylbilane pre-uroporphyrinogen in several discrete steps. The polypeptide is Porphobilinogen deaminase (hemC) (Halalkalibacterium halodurans (strain ATCC BAA-125 / DSM 18197 / FERM 7344 / JCM 9153 / C-125) (Bacillus halodurans)).